Reading from the N-terminus, the 227-residue chain is Cytochrome c oxidase subunit 2 (227 aa).

The Mitochondrial intermembrane segment spans residues 1–14 (MAYPMQLGFQDATS). The chain crosses the membrane as a helical span at residues 15-45 (PIMEELLHFHDHTLMIVFLISSLVLYIISLM). Topologically, residues 46–59 (LTTKLTHTSTMDAQ) are mitochondrial matrix. The chain crosses the membrane as a helical span at residues 60-87 (EVETIWTILPAIILIMIALPSLRILYMM). Topologically, residues 88–227 (DEINNPSLTV…YFEKWSASML (140 aa)) are mitochondrial intermembrane. Cys196, Glu198, Cys200, His204, and Met207 together coordinate Cu cation. Position 198 (Glu198) interacts with Mg(2+). At Tyr218 the chain carries Phosphotyrosine.

The protein belongs to the cytochrome c oxidase subunit 2 family. As to quaternary structure, component of the cytochrome c oxidase (complex IV, CIV), a multisubunit enzyme composed of 14 subunits. The complex is composed of a catalytic core of 3 subunits MT-CO1, MT-CO2 and MT-CO3, encoded in the mitochondrial DNA, and 11 supernumerary subunits COX4I, COX5A, COX5B, COX6A, COX6B, COX6C, COX7A, COX7B, COX7C, COX8 and NDUFA4, which are encoded in the nuclear genome. The complex exists as a monomer or a dimer and forms supercomplexes (SCs) in the inner mitochondrial membrane with NADH-ubiquinone oxidoreductase (complex I, CI) and ubiquinol-cytochrome c oxidoreductase (cytochrome b-c1 complex, complex III, CIII), resulting in different assemblies (supercomplex SCI(1)III(2)IV(1) and megacomplex MCI(2)III(2)IV(2)). Found in a complex with TMEM177, COA6, COX18, COX20, SCO1 and SCO2. Interacts with TMEM177 in a COX20-dependent manner. Interacts with COX20. Interacts with COX16. Cu cation serves as cofactor.

The protein localises to the mitochondrion inner membrane. The catalysed reaction is 4 Fe(II)-[cytochrome c] + O2 + 8 H(+)(in) = 4 Fe(III)-[cytochrome c] + 2 H2O + 4 H(+)(out). Its function is as follows. Component of the cytochrome c oxidase, the last enzyme in the mitochondrial electron transport chain which drives oxidative phosphorylation. The respiratory chain contains 3 multisubunit complexes succinate dehydrogenase (complex II, CII), ubiquinol-cytochrome c oxidoreductase (cytochrome b-c1 complex, complex III, CIII) and cytochrome c oxidase (complex IV, CIV), that cooperate to transfer electrons derived from NADH and succinate to molecular oxygen, creating an electrochemical gradient over the inner membrane that drives transmembrane transport and the ATP synthase. Cytochrome c oxidase is the component of the respiratory chain that catalyzes the reduction of oxygen to water. Electrons originating from reduced cytochrome c in the intermembrane space (IMS) are transferred via the dinuclear copper A center (CU(A)) of subunit 2 and heme A of subunit 1 to the active site in subunit 1, a binuclear center (BNC) formed by heme A3 and copper B (CU(B)). The BNC reduces molecular oxygen to 2 water molecules using 4 electrons from cytochrome c in the IMS and 4 protons from the mitochondrial matrix. The chain is Cytochrome c oxidase subunit 2 (MT-CO2) from Ovis aries (Sheep).